The sequence spans 37 residues: U1-ectatotoxin-Eb1a subunit B (37 aa).

This sequence belongs to the ectatomin family. Ectatomin-Eq subfamily. Heterodimer of subunits A and B; disulfide-linked. In terms of tissue distribution, expressed by the venom gland.

The protein resides in the secreted. It is found in the target cell membrane. The polypeptide is U1-ectatotoxin-Eb1a subunit B (Ectatomma brunneum (Ant)).